The primary structure comprises 86 residues: MNIFRLFNKQRTAPAARERLQVLLAHERSSAGSDLVSLLREEILAVIAKHVELDHDKVQVTIDRNEFVSTLEIDVEIPLNAAVQAA.

It belongs to the MinE family.

In terms of biological role, prevents the cell division inhibition by proteins MinC and MinD at internal division sites while permitting inhibition at polar sites. This ensures cell division at the proper site by restricting the formation of a division septum at the midpoint of the long axis of the cell. This chain is Cell division topological specificity factor, found in Rhizobium etli (strain ATCC 51251 / DSM 11541 / JCM 21823 / NBRC 15573 / CFN 42).